Consider the following 759-residue polypeptide: NADP-dependent malic enzyme (759 aa).

The malic enzyme stretch occupies residues 1–428; it reads MDDQLKQSAL…KLTEFVYKTN (428 aa). Tyr-39 functions as the Proton donor in the catalytic mechanism. Residue Lys-56 is modified to N6-acetyllysine. Lys-94 serves as the catalytic Proton acceptor. Residues Glu-136, Asp-137, and Asp-162 each coordinate a divalent metal cation. Residues 195–198, Asn-288, and Asn-320 contribute to the NADP(+) site; that span reads AGAA. The interval 429–759 is phosphate acetyltransferase; required for oligomerization, inhibition by acetyl-CoA and activation by glutamate, aspartate, and glucose-6-phosphate; it reads LFMKPIFSQA…AVVEAQTQPL (331 aa).

This sequence in the N-terminal section; belongs to the malic enzymes family. It in the C-terminal section; belongs to the phosphate acetyltransferase and butyryltransferase family. In terms of assembly, homooligomer, possibly an octamer. Mg(2+) serves as cofactor. Requires Mn(2+) as cofactor.

It carries out the reaction (S)-malate + NADP(+) = pyruvate + CO2 + NADPH. The enzyme catalyses oxaloacetate + H(+) = pyruvate + CO2. Its activity is regulated as follows. Inhibited by 4 mM Mg(2+) and acetyl-CoA, competitively inhibited by fumarate and oxaloacetate. Activated by glutamate and aspartate, glucose-6-phosphate, acetyl-phosphate and 2 mM KCl. In terms of biological role, catalyzes the decarboxylation of malate to pyruvate. In vitro, shows malolactic enzyme activity in the presence of NADPH. However, it is unlikely that this activity is of relevance in E.coli, which produces little NADPH. This chain is NADP-dependent malic enzyme (maeB), found in Escherichia coli (strain K12).